The sequence spans 414 residues: uncharacterized protein (414 aa).

The interval 87–117 (KTNDDNKTNGRETHLRPSPSKPEYTGRPTQN) is disordered. Residues 88 to 101 (TNDDNKTNGRETHL) show a composition bias toward basic and acidic residues. Residues 243-405 (SMLQSSIDKL…RNKLEMEVER (163 aa)) adopt a coiled-coil conformation.

This is an uncharacterized protein from Encephalitozoon cuniculi (strain GB-M1) (Microsporidian parasite).